Reading from the N-terminus, the 106-residue chain is Large ribosomal subunit protein uL24 (106 aa).

It belongs to the universal ribosomal protein uL24 family. Part of the 50S ribosomal subunit.

One of two assembly initiator proteins, it binds directly to the 5'-end of the 23S rRNA, where it nucleates assembly of the 50S subunit. Its function is as follows. One of the proteins that surrounds the polypeptide exit tunnel on the outside of the subunit. In Clostridium acetobutylicum (strain ATCC 824 / DSM 792 / JCM 1419 / IAM 19013 / LMG 5710 / NBRC 13948 / NRRL B-527 / VKM B-1787 / 2291 / W), this protein is Large ribosomal subunit protein uL24.